The following is a 281-amino-acid chain: DegV domain-containing protein CA_C0948 (281 aa).

Residues Ile-4–Glu-280 enclose the DegV domain. 2 residues coordinate hexadecanoate: Ser-60 and Ser-93.

In terms of biological role, may bind long-chain fatty acids, such as palmitate, and may play a role in lipid transport or fatty acid metabolism. The chain is DegV domain-containing protein CA_C0948 from Clostridium acetobutylicum (strain ATCC 824 / DSM 792 / JCM 1419 / IAM 19013 / LMG 5710 / NBRC 13948 / NRRL B-527 / VKM B-1787 / 2291 / W).